The primary structure comprises 446 residues: N-succinylarginine dihydrolase (446 aa).

Substrate-binding positions include 19–28, Asn-110, and 137–138; these read AGLSFGNVAS and HR. Residue Glu-174 is part of the active site. Arg-213 is a substrate binding site. Residue His-249 is part of the active site. 2 residues coordinate substrate: Asp-251 and Asn-364. Residue Cys-370 is the Nucleophile of the active site.

This sequence belongs to the succinylarginine dihydrolase family. As to quaternary structure, homodimer.

The catalysed reaction is N(2)-succinyl-L-arginine + 2 H2O + 2 H(+) = N(2)-succinyl-L-ornithine + 2 NH4(+) + CO2. Its pathway is amino-acid degradation; L-arginine degradation via AST pathway; L-glutamate and succinate from L-arginine: step 2/5. In terms of biological role, catalyzes the hydrolysis of N(2)-succinylarginine into N(2)-succinylornithine, ammonia and CO(2). The sequence is that of N-succinylarginine dihydrolase from Burkholderia cenocepacia (strain HI2424).